We begin with the raw amino-acid sequence, 202 residues long: ATP-dependent Clp protease proteolytic subunit 2 (202 aa).

Catalysis depends on serine 99, which acts as the Nucleophile. Histidine 124 is a catalytic residue.

Belongs to the peptidase S14 family. As to quaternary structure, fourteen ClpP subunits assemble into 2 heptameric rings which stack back to back to give a disk-like structure with a central cavity, resembling the structure of eukaryotic proteasomes.

It localises to the cytoplasm. It carries out the reaction Hydrolysis of proteins to small peptides in the presence of ATP and magnesium. alpha-casein is the usual test substrate. In the absence of ATP, only oligopeptides shorter than five residues are hydrolyzed (such as succinyl-Leu-Tyr-|-NHMec, and Leu-Tyr-Leu-|-Tyr-Trp, in which cleavage of the -Tyr-|-Leu- and -Tyr-|-Trp bonds also occurs).. Cleaves peptides in various proteins in a process that requires ATP hydrolysis. Has a chymotrypsin-like activity. Plays a major role in the degradation of misfolded proteins. This Desulfitobacterium hafniense (strain Y51) protein is ATP-dependent Clp protease proteolytic subunit 2.